The chain runs to 365 residues: Probable dual-specificity RNA methyltransferase RlmN (365 aa).

The Proton acceptor role is filled by Glu-111. The Radical SAM core domain maps to 117-351 (ADDRMTACIS…VNIRRSRGKD (235 aa)). Cys-124 and Cys-356 are disulfide-bonded. The [4Fe-4S] cluster site is built by Cys-131, Cys-135, and Cys-138. S-adenosyl-L-methionine contacts are provided by residues 182–183 (GE), Ser-214, 237–239 (SLH), and Asn-313. Cys-356 acts as the S-methylcysteine intermediate in catalysis.

This sequence belongs to the radical SAM superfamily. RlmN family. Requires [4Fe-4S] cluster as cofactor.

The protein localises to the cytoplasm. The enzyme catalyses adenosine(2503) in 23S rRNA + 2 reduced [2Fe-2S]-[ferredoxin] + 2 S-adenosyl-L-methionine = 2-methyladenosine(2503) in 23S rRNA + 5'-deoxyadenosine + L-methionine + 2 oxidized [2Fe-2S]-[ferredoxin] + S-adenosyl-L-homocysteine. The catalysed reaction is adenosine(37) in tRNA + 2 reduced [2Fe-2S]-[ferredoxin] + 2 S-adenosyl-L-methionine = 2-methyladenosine(37) in tRNA + 5'-deoxyadenosine + L-methionine + 2 oxidized [2Fe-2S]-[ferredoxin] + S-adenosyl-L-homocysteine. Specifically methylates position 2 of adenine 2503 in 23S rRNA and position 2 of adenine 37 in tRNAs. In Cytophaga hutchinsonii (strain ATCC 33406 / DSM 1761 / CIP 103989 / NBRC 15051 / NCIMB 9469 / D465), this protein is Probable dual-specificity RNA methyltransferase RlmN.